A 328-amino-acid polypeptide reads, in one-letter code: 4-hydroxythreonine-4-phosphate dehydrogenase (328 aa).

Residues histidine 133 and threonine 134 each contribute to the substrate site. A divalent metal cation contacts are provided by histidine 163, histidine 208, and histidine 263. Residues lysine 271, asparagine 280, and arginine 289 each contribute to the substrate site.

It belongs to the PdxA family. In terms of assembly, homodimer. Requires Zn(2+) as cofactor. Mg(2+) serves as cofactor. It depends on Co(2+) as a cofactor.

It localises to the cytoplasm. The catalysed reaction is 4-(phosphooxy)-L-threonine + NAD(+) = 3-amino-2-oxopropyl phosphate + CO2 + NADH. The protein operates within cofactor biosynthesis; pyridoxine 5'-phosphate biosynthesis; pyridoxine 5'-phosphate from D-erythrose 4-phosphate: step 4/5. Catalyzes the NAD(P)-dependent oxidation of 4-(phosphooxy)-L-threonine (HTP) into 2-amino-3-oxo-4-(phosphooxy)butyric acid which spontaneously decarboxylates to form 3-amino-2-oxopropyl phosphate (AHAP). The protein is 4-hydroxythreonine-4-phosphate dehydrogenase of Chromobacterium violaceum (strain ATCC 12472 / DSM 30191 / JCM 1249 / CCUG 213 / NBRC 12614 / NCIMB 9131 / NCTC 9757 / MK).